Here is a 187-residue protein sequence, read N- to C-terminus: Pseudo histidine-containing phosphotransfer protein 1 (187 aa).

Residues 74–169 form the HPt domain; that stretch reads SPNFVEEVVT…AVLRQKLESY (96 aa).

Its function is as follows. Functions as a two-component phosphorelay mediator between cytokinin sensor histidine kinases and response regulators (B-type ARRs). Plays an important role in propagating cytokinin signal transduction. This is Pseudo histidine-containing phosphotransfer protein 1 from Oryza sativa subsp. japonica (Rice).